Here is a 469-residue protein sequence, read N- to C-terminus: Mitochondrial adenyl nucleotide antiporter SLC25A25 (469 aa).

The tract at residues 1–165 is regulatory N-terminal domain; that stretch reads MLCLCLYVPV…LYWKHSTIFD (165 aa). Residues 1–189 are Mitochondrial intermembrane-facing; that stretch reads MLCLCLYVPV…ERQTGMWWRH (189 aa). 3 consecutive EF-hand domains span residues 47–80, 78–113, and 114–149; these read TYRQ…QDHE, DHEK…LGVK, and ISEQ…HPVE. The Ca(2+) site is built by D60, D62, D64, Q66, and E71. Positions 151–160 are linker region; sequence IPEIILYWKH. The interval 166-469 is C-terminal transmembrane transporter domain; the sequence is VGENLTVPDE…LKITLGVQSR (304 aa). Solcar repeat units lie at residues 184–270, 278–363, and 375–463; these read GMWW…IKRL, LRIH…LKNA, and PGVF…LKIT. The chain crosses the membrane as a helical span at residues 190–207; the sequence is LVAGGGAGAVSRTCTAPL. At 208 to 244 the chain is on the mitochondrial matrix side; sequence DRLKVLMQVHASRSNNMGIVGGFTQMIREGGARSLWR. A helical membrane pass occupies residues 245–264; it reads GNGINVLKIAPESAIKFMAY. Topologically, residues 265–287 are mitochondrial intermembrane; the sequence is EQIKRLVGSDQETLRIHERLVAG. Residues 288–301 traverse the membrane as a helical segment; sequence SLAGAIAQSSIYPM. Topologically, residues 302–337 are mitochondrial matrix; the sequence is EVLKTRMALRKTGQYSGMLDCARRILAREGVAAFYK. A helical membrane pass occupies residues 338 to 357; the sequence is GYVPNMLGIIPYAGIDLAVY. Residues 358–380 are Mitochondrial intermembrane-facing; the sequence is ETLKNAWLQHYAVNSADPGVFVL. The helical transmembrane segment at 381–398 threads the bilayer; sequence LACGTMSSTCGQLASYPL. Over 399–437 the chain is Mitochondrial matrix; that stretch reads ALVRTRMQAQASIEGAPEVTMSSLFKHILRTEGAFGLYR. The chain crosses the membrane as a helical span at residues 438-457; that stretch reads GLAPNFMKVIPAVSISYVVY. The Mitochondrial intermembrane segment spans residues 458–469; the sequence is ENLKITLGVQSR.

It belongs to the mitochondrial carrier (TC 2.A.29) family. Widely expressed. Expressed in fetal and adult liver, skeletal muscle, testis, ovary, hippocampus and caudate nucleus. As to expression, expressed in all tissues tested. In terms of tissue distribution, expression is restricted to kidney and lung.

The protein resides in the mitochondrion inner membrane. The catalysed reaction is Mg(2+)(out) + phosphate(in) + ATP(out) = Mg(2+)(in) + phosphate(out) + ATP(in). With respect to regulation, activated by an increase in cytosolic calcium levels that induce a conformational change of the N-terminal regulatory domain, uncapping the channel and allowing transport. In terms of biological role, electroneutral antiporter that most probably mediates the transport of adenyl nucleotides through the inner mitochondrial membrane. Originally identified as an ATP-magnesium/inorganic phosphate antiporter, it could have a broader specificity for adenyl nucleotides. By regulating the mitochondrial matrix adenyl nucleotide pool could adapt to changing cellular energetic demands and indirectly regulate adenyl nucleotide-dependent metabolic pathways. This is Mitochondrial adenyl nucleotide antiporter SLC25A25 from Homo sapiens (Human).